The following is a 423-amino-acid chain: MPNTPHTMNLYIKNIAQLVTCQGTEAKHGREAMGQIHTIEGPAAVVIRDGIITFAGRMADVAPSMTEGCRELDATGRCVLPGFVDSHTHLVFGGYREDEFQWRLAGDSYMSIMERGGGIASTMRATRAESEDELKASAHRHLSNMMKMGVTTVEAKSGYGMNLETELKQLRVVRDLQDEQPLDLYSTFMGAHDTAPEYKGRPTEFIEYLCREVLPEVVRQNLAECCDIFTEKGVFDHEQTRRMLTAAKEAGLSVKMHADEIVPFGGAELAAELGCLSADHLLRISDAGIKALAESNTVATLLPCTAFSLRADYAPARKMIDAGCAVALGSDLNPGSCFSASVPLMFALATLYMGMTVEEAITALTINGAAAIGRADTIGSIEPGKKGDLVVLQYPSYKFLSYHFGMNLVEHTVKGGRVVYTNS.

Residues His-87 and His-89 each coordinate Fe(3+). Positions 87 and 89 each coordinate Zn(2+). Residues Arg-96, Tyr-159, and His-192 each contribute to the 4-imidazolone-5-propanoate site. Tyr-159 serves as a coordination point for N-formimidoyl-L-glutamate. A Fe(3+)-binding site is contributed by His-257. His-257 contacts Zn(2+). Glu-260 lines the 4-imidazolone-5-propanoate pocket. Asp-331 is a Fe(3+) binding site. Asp-331 contributes to the Zn(2+) binding site. N-formimidoyl-L-glutamate is bound by residues Asn-333 and Gly-335. Ser-336 lines the 4-imidazolone-5-propanoate pocket.

The protein belongs to the metallo-dependent hydrolases superfamily. HutI family. It depends on Zn(2+) as a cofactor. Fe(3+) serves as cofactor.

The protein resides in the cytoplasm. The catalysed reaction is 4-imidazolone-5-propanoate + H2O = N-formimidoyl-L-glutamate. It functions in the pathway amino-acid degradation; L-histidine degradation into L-glutamate; N-formimidoyl-L-glutamate from L-histidine: step 3/3. Catalyzes the hydrolytic cleavage of the carbon-nitrogen bond in imidazolone-5-propanoate to yield N-formimidoyl-L-glutamate. It is the third step in the universal histidine degradation pathway. The sequence is that of Imidazolonepropionase from Porphyromonas gingivalis (strain ATCC 33277 / DSM 20709 / CIP 103683 / JCM 12257 / NCTC 11834 / 2561).